Here is a 311-residue protein sequence, read N- to C-terminus: Glutaminase (311 aa).

Substrate contacts are provided by Ser66, Asn116, Glu162, Asn169, Tyr193, Tyr245, and Val263.

The protein belongs to the glutaminase family. In terms of assembly, homotetramer.

It carries out the reaction L-glutamine + H2O = L-glutamate + NH4(+). This Rhodopseudomonas palustris (strain TIE-1) protein is Glutaminase.